The following is a 193-amino-acid chain: Dual-action ribosomal maturation protein DarP (193 aa).

Over residues 1-10 the composition is skewed to basic and acidic residues; the sequence is MRGRDEDTGE. Disordered regions lie at residues 1 to 20 and 171 to 193; these read MRGR…SQQR and QEQG…EDDE. Residues 181–193 show a composition bias toward acidic residues; that stretch reads GLEDGESALEDDE.

Belongs to the DarP family.

It is found in the cytoplasm. Functionally, member of a network of 50S ribosomal subunit biogenesis factors which assembles along the 30S-50S interface, preventing incorrect 23S rRNA structures from forming. Promotes peptidyl transferase center (PTC) maturation. The sequence is that of Dual-action ribosomal maturation protein DarP from Xanthomonas oryzae pv. oryzae (strain MAFF 311018).